Reading from the N-terminus, the 407-residue chain is GTPase Obg (407 aa).

The region spanning 1–159 (MKFVDEVSIR…RDLKLEMKVL (159 aa)) is the Obg domain. A disordered region spans residues 128-148 (TRFKSSTNRAPRQTTPGKPGE). The segment covering 129–143 (RFKSSTNRAPRQTTP) has biased composition (polar residues). The OBG-type G domain maps to 160 to 333 (ADVGLLGLPN…LTRDIMRYLE (174 aa)). GTP-binding positions include 166–173 (GLPNAGKS), 191–195 (FTTLV), 213–216 (DIPG), 283–286 (NKCD), and 314–316 (SAI). Mg(2+)-binding residues include Ser173 and Thr193. Residues 376–407 (SGVKSVHDIGDDDWDEEDVDDEDGPEIIYVRD) form a disordered region. Residues 385–400 (GDDDWDEEDVDDEDGP) show a composition bias toward acidic residues.

This sequence belongs to the TRAFAC class OBG-HflX-like GTPase superfamily. OBG GTPase family. Monomer. Requires Mg(2+) as cofactor.

It is found in the cytoplasm. In terms of biological role, an essential GTPase which binds GTP, GDP and possibly (p)ppGpp with moderate affinity, with high nucleotide exchange rates and a fairly low GTP hydrolysis rate. Plays a role in control of the cell cycle, stress response, ribosome biogenesis and in those bacteria that undergo differentiation, in morphogenesis control. The chain is GTPase Obg from Pseudomonas fluorescens (strain Pf0-1).